Consider the following 380-residue polypeptide: Cytochrome b (380 aa).

The next 4 membrane-spanning stretches (helical) occupy residues 34–54 (FGSLLGICLMTQIITGLLLAM), 78–99 (WLIRNLHANGASFFFICIYLHI), 114–134 (WNIGVILPPTLMATAFVGYVL), and 179–199 (FFALHFLLLFVTVGLTLVHLT). 2 residues coordinate heme b: His84 and His98. Residues His183 and His197 each contribute to the heme b site. A ubiquinone is bound at residue His202. The next 4 helical transmembrane spans lie at 227–247 (IKDMLGFALMLILLATMALFS), 289–309 (LGGVLALAASVLVLFLVPLLH), 321–341 (LLPFLFWTLVANLLILTWVGS), and 348–368 (FIIIGQVASFTYFTXILVLFP).

The protein belongs to the cytochrome b family. The cytochrome bc1 complex contains 11 subunits: 3 respiratory subunits (MT-CYB, CYC1 and UQCRFS1), 2 core proteins (UQCRC1 and UQCRC2) and 6 low-molecular weight proteins (UQCRH/QCR6, UQCRB/QCR7, UQCRQ/QCR8, UQCR10/QCR9, UQCR11/QCR10 and a cleavage product of UQCRFS1). This cytochrome bc1 complex then forms a dimer. Heme b is required as a cofactor.

It is found in the mitochondrion inner membrane. Component of the ubiquinol-cytochrome c reductase complex (complex III or cytochrome b-c1 complex) that is part of the mitochondrial respiratory chain. The b-c1 complex mediates electron transfer from ubiquinol to cytochrome c. Contributes to the generation of a proton gradient across the mitochondrial membrane that is then used for ATP synthesis. The sequence is that of Cytochrome b (MT-CYB) from Gymnorhina tibicen (Australian magpie).